The sequence spans 219 residues: Small ribosomal subunit protein uS3 (219 aa).

The KH type-2 domain maps to 38–106 (IREYINVRLK…RVHINILEVK (69 aa)).

Belongs to the universal ribosomal protein uS3 family. As to quaternary structure, part of the 30S ribosomal subunit. Forms a tight complex with proteins S10 and S14.

Functionally, binds the lower part of the 30S subunit head. Binds mRNA in the 70S ribosome, positioning it for translation. This is Small ribosomal subunit protein uS3 from Bacillus thuringiensis (strain Al Hakam).